The chain runs to 209 residues: V-type ATP synthase subunit D (209 aa).

Belongs to the V-ATPase D subunit family.

In terms of biological role, produces ATP from ADP in the presence of a proton gradient across the membrane. The polypeptide is V-type ATP synthase subunit D (Anaeromyxobacter dehalogenans (strain 2CP-C)).